The primary structure comprises 147 residues: Hemoglobin subunit epsilon (147 aa).

A Globin domain is found at 3 to 147 (HFTAEEKAAI…VAIALGHKYH (145 aa)). Ser-14 and Ser-51 each carry phosphoserine. The heme b site is built by His-64 and His-93.

The protein belongs to the globin family. Heterotetramer of two alpha chains and two epsilon chains in early embryonic hemoglobin Gower-2; two zeta chains and two epsilon chains in early embryonic hemoglobin Gower-1. As to expression, red blood cells.

Its function is as follows. The epsilon chain is a beta-type chain of early mammalian embryonic hemoglobin. This chain is Hemoglobin subunit epsilon (HBE1), found in Pithecia irrorata (Gray monk saki).